Consider the following 350-residue polypeptide: Chlorophyll a/b light-harvesting protein PcbA (350 aa).

The next 6 helical transmembrane spans lie at 26-46, 62-82, 87-107, 214-234, 248-268, and 309-329; these read LSAHIAQYALITFWAGGITLF, LILIPHLATLGWGIGSGGQVV, YFVIGVIHLVASAVFGAGALY, IAVVLLAGGFWHINQAPFPWA, LSASLAGLSMAGFAAAYFSAV, and LCNVHFFLAFFVLQGHLWHAL.

Belongs to the PsbB/PsbC family. IsiA/Pcb subfamily. In terms of assembly, the antenna complex consists of chlorophylls (a and b) and chlorophyll a/b binding proteins. The cofactor is chlorophyll a. Chlorophyll b serves as cofactor.

It localises to the cellular thylakoid membrane. In terms of biological role, the antenna complex functions as a light receptor, it captures and delivers excitation energy to photosystems II and I. The Prochlorales pcb genes are not related to higher plant LHCs. In Prochlorothrix hollandica, this protein is Chlorophyll a/b light-harvesting protein PcbA (pcbA).